A 115-amino-acid chain; its full sequence is Con-Ins G1c (115 aa).

A signal peptide spans 1 to 24 (MTTSFYFLLMALGLLLYVCQSSFG). Residues 25–29 (NQHTR) constitute a propeptide that is removed on maturation. Pro-34 is subject to 4-hydroxyproline; partial. Cystine bridges form between Cys-38/Cys-101, Cys-50/Cys-114, and Cys-100/Cys-105. Glu-41 carries the 4-carboxyglutamate modification. The propeptide at 53–94 (KRNDAGKKRGRASPLWQRRGSLSQLKARAKRNGAFHLPRDGR) is c peptide. Glu-98 bears the 4-carboxyglutamate mark. Pro-104 is subject to 4-hydroxyproline; partial. A 4-carboxyglutamate; partial modification is found at Glu-109.

This sequence belongs to the insulin family. Heterodimer of A and B chains; disulfide-linked. Post-translationally, is different from Con-Ins G1a (AC A0A0B5AC95) due to absence of amidation at Cys-114. As to expression, expressed by the venom gland.

The protein localises to the secreted. Its function is as follows. This venom insulin, from a fish-hunting cone snail, facilitates prey capture by rapidly inducing hypoglycemic shock. It is one of the smallest known insulin found in nature and lacks the C-terminal segment of the B chain that, in human insulin, mediates engagement of the insulin receptor (INSR) and assembly of the hormone's hexameric storage form. Despite lacking this segment, it both binds and activates human insulin receptor (long isoform (HIR-B)) with only a 10-fold lower potency. In vivo, intraperitoneal injection of this peptide into zebrafish lowers blood glucose with the same potency than human insulin. In addition, when applied to water, this peptide reduces overall locomotor activity of zebrafish larvae, observed as a significant decrease in the percentage of time spent swimming and movement frequency. The sequence is that of Con-Ins G1c from Conus geographus (Geography cone).